Here is a 98-residue protein sequence, read N- to C-terminus: Aspartyl/glutamyl-tRNA(Asn/Gln) amidotransferase subunit C (98 aa).

Belongs to the GatC family. Heterotrimer of A, B and C subunits.

The enzyme catalyses L-glutamyl-tRNA(Gln) + L-glutamine + ATP + H2O = L-glutaminyl-tRNA(Gln) + L-glutamate + ADP + phosphate + H(+). It carries out the reaction L-aspartyl-tRNA(Asn) + L-glutamine + ATP + H2O = L-asparaginyl-tRNA(Asn) + L-glutamate + ADP + phosphate + 2 H(+). Its function is as follows. Allows the formation of correctly charged Asn-tRNA(Asn) or Gln-tRNA(Gln) through the transamidation of misacylated Asp-tRNA(Asn) or Glu-tRNA(Gln) in organisms which lack either or both of asparaginyl-tRNA or glutaminyl-tRNA synthetases. The reaction takes place in the presence of glutamine and ATP through an activated phospho-Asp-tRNA(Asn) or phospho-Glu-tRNA(Gln). The sequence is that of Aspartyl/glutamyl-tRNA(Asn/Gln) amidotransferase subunit C from Gloeothece citriformis (strain PCC 7424) (Cyanothece sp. (strain PCC 7424)).